Here is a 32-residue protein sequence, read N- to C-terminus: Photosystem II reaction center protein T (32 aa).

Residues 3–23 (ALVYTFLLIGTLVVIFFAIFF) traverse the membrane as a helical segment.

The protein belongs to the PsbT family. As to quaternary structure, PSII is composed of 1 copy each of membrane proteins PsbA, PsbB, PsbC, PsbD, PsbE, PsbF, PsbH, PsbI, PsbJ, PsbK, PsbL, PsbM, PsbT, PsbX, PsbY, PsbZ, Psb30/Ycf12, at least 3 peripheral proteins of the oxygen-evolving complex and a large number of cofactors. It forms dimeric complexes.

It localises to the plastid. Its subcellular location is the chloroplast thylakoid membrane. Found at the monomer-monomer interface of the photosystem II (PS II) dimer, plays a role in assembly and dimerization of PSII. PSII is a light-driven water plastoquinone oxidoreductase, using light energy to abstract electrons from H(2)O, generating a proton gradient subsequently used for ATP formation. This chain is Photosystem II reaction center protein T, found in Emiliania huxleyi (Coccolithophore).